The primary structure comprises 505 residues: L-carnitine/gamma-butyrobetaine antiporter (505 aa).

12 helical membrane-spanning segments follow: residues 10–30, 51–71, 92–112, 143–163, 195–215, 231–251, 263–283, 316–336, 347–367, 403–423, 446–466, and 475–495; these read IEPKVFFPPLIIVGILCWLTV, WGWAFEWYMIVMLFGWFWLVF, IFMMFASCTSAAVLFWGSIEI, GPLPWATYSFLSVAFAYFFFV, FYLVALIFAMGTSLGLATPLV, LDAIIITCWIILNAICVACGL, SYLSFLMLGWVFIVSGASFIM, WTVFYWAWWVIYAIQMSIFLA, LCFGMVMGLTASTWILWTVLG, LSTATMWGFFILCFIATVTLI, LLVRIGWSVLVGIIGIVLLAL, and AIIAGGCPLFFVNIMVTLSFI.

Belongs to the BCCT transporter (TC 2.A.15) family. CaiT subfamily. Homotrimer.

The protein resides in the cell inner membrane. It catalyses the reaction 4-(trimethylamino)butanoate(in) + (R)-carnitine(out) = 4-(trimethylamino)butanoate(out) + (R)-carnitine(in). It functions in the pathway amine and polyamine metabolism; carnitine metabolism. Catalyzes the exchange of L-carnitine for gamma-butyrobetaine. This is L-carnitine/gamma-butyrobetaine antiporter from Salmonella paratyphi A (strain ATCC 9150 / SARB42).